The chain runs to 68 residues: Protein SlyX homolog (68 aa).

It belongs to the SlyX family.

This Brucella suis (strain ATCC 23445 / NCTC 10510) protein is Protein SlyX homolog.